Consider the following 790-residue polypeptide: PGC-1 and ERR-induced regulator in muscle protein 1 (790 aa).

Disordered regions lie at residues 38–391, 425–449, 507–545, and 626–648; these read LLSS…TPIS, VASS…STPV, SVAG…EAVA, and QRSR…APIP. A compositionally biased stretch (low complexity) spans 40 to 52; that stretch reads SSDIDQGDSSGSS. Polar residues-rich tracts occupy residues 80-89 and 98-107; these read ATQQPVSRSQ and TGQQTPSTSA. Residues 111 to 123 are compositionally biased toward low complexity; the sequence is APPSLGPGASPPS. The span at 146–157 shows a compositional bias: pro residues; that stretch reads APRPPGEPPGSP. Residues 158 to 169 are compositionally biased toward low complexity; the sequence is KSPGHSTGSQRP. A compositionally biased stretch (pro residues) spans 170–179; that stretch reads PDSPGAPPRS. A compositionally biased stretch (polar residues) spans 366-391; that stretch reads KPQSDTAVSTPASEPQSSVALSTPIS. Residues 515-532 are compositionally biased toward polar residues; that stretch reads KPGSGQASARPSAPQTAT. A compositionally biased stretch (pro residues) spans 635 to 648; the sequence is EPLPRADPVPAPIP.

In terms of tissue distribution, muscle-specific expression is increased by endurance exercise.

It is found in the cytoplasm. It localises to the nucleus. In terms of biological role, regulates the expression of selective PPARGC1A/B and ESRRA/B/G target genes with roles in glucose and lipid metabolism, energy transfer, contractile function, muscle mitochondrial biogenesis and oxidative capacity. Required for the efficient induction of MT-CO2, MT-CO3, COX4I1, TFB1M, TFB2M, POLRMT and SIRT3 by PPARGC1A. Positively regulates the PPARGC1A/ESRRG-induced expression of CKMT2, TNNI3 and SLC2A4 and negatively regulates the PPARGC1A/ESRRG-induced expression of PDK4. This Homo sapiens (Human) protein is PGC-1 and ERR-induced regulator in muscle protein 1 (PERM1).